The primary structure comprises 315 residues: tRNA wybutosine-synthesizing protein 5 (315 aa).

Residues 102–267 (DEKYYLRSLG…YDTTDTYGNK (166 aa)) enclose the JmjC domain. Residue tyrosine 106 participates in 2-oxoglutarate binding. Residues histidine 160 and aspartate 162 each contribute to the Fe cation site. Asparagine 166 and lysine 175 together coordinate 2-oxoglutarate. Histidine 235 is a Fe cation binding site.

This sequence belongs to the TYW5 family. In terms of assembly, homodimer. It depends on Fe(2+) as a cofactor.

The catalysed reaction is 7-[(3S)-3-amino-3-carboxypropyl]wyosine(37) in tRNA(Phe) + 2-oxoglutarate + O2 = 7-(2-hydroxy-3-amino-3-carboxypropyl)wyosine(37) in tRNA(Phe) + succinate + CO2. Its pathway is tRNA modification; wybutosine-tRNA(Phe) biosynthesis. In terms of biological role, tRNA hydroxylase that acts as a component of the wybutosine biosynthesis pathway. Wybutosine is a hyper modified guanosine with a tricyclic base found at the 3'-position adjacent to the anticodon of eukaryotic phenylalanine tRNA. Catalyzes the hydroxylation of 7-(a-amino-a-carboxypropyl)wyosine (yW-72) into undermodified hydroxywybutosine (OHyW*). OHyW* being further transformed into hydroxywybutosine (OHyW) by LCMT2/TYW4. OHyW is a derivative of wybutosine found in higher eukaryotes. The chain is tRNA wybutosine-synthesizing protein 5 (Tyw5) from Mus musculus (Mouse).